A 503-amino-acid polypeptide reads, in one-letter code: UDP-N-acetylmuramoylalanine--D-glutamate ligase (503 aa).

129–135 (GTNGKTT) contacts ATP.

It belongs to the MurCDEF family.

It localises to the cytoplasm. It catalyses the reaction UDP-N-acetyl-alpha-D-muramoyl-L-alanine + D-glutamate + ATP = UDP-N-acetyl-alpha-D-muramoyl-L-alanyl-D-glutamate + ADP + phosphate + H(+). The protein operates within cell wall biogenesis; peptidoglycan biosynthesis. Functionally, cell wall formation. Catalyzes the addition of glutamate to the nucleotide precursor UDP-N-acetylmuramoyl-L-alanine (UMA). This chain is UDP-N-acetylmuramoylalanine--D-glutamate ligase, found in Burkholderia cenocepacia (strain HI2424).